The following is a 421-amino-acid chain: Trimethyllysine dioxygenase, mitochondrial (421 aa).

A mitochondrion-targeting transit peptide spans 1–15; it reads MWCHRLSHLQSRLQD. K236 is modified (N6-acetyllysine). Positions 242, 244, and 389 each coordinate Fe cation.

The protein belongs to the gamma-BBH/TMLD family. In terms of assembly, homodimer. It depends on Fe(2+) as a cofactor. Requires L-ascorbate as cofactor.

The protein resides in the mitochondrion matrix. It catalyses the reaction N(6),N(6),N(6)-trimethyl-L-lysine + 2-oxoglutarate + O2 = (3S)-3-hydroxy-N(6),N(6),N(6)-trimethyl-L-lysine + succinate + CO2. It functions in the pathway amine and polyamine biosynthesis; carnitine biosynthesis. Functionally, converts trimethyllysine (TML) into hydroxytrimethyllysine (HTML). This is Trimethyllysine dioxygenase, mitochondrial (TMLHE) from Bos taurus (Bovine).